The chain runs to 162 residues: EF-hand calcium-binding domain-containing protein 11 (162 aa).

EF-hand domains are found at residues 18 to 53 (SERR…LFGY), 91 to 126 (LYRN…VAPK), and 127 to 162 (LPAR…GQSK). Ca(2+) is bound by residues aspartate 140, aspartate 142, aspartate 144, histidine 146, and aspartate 151.

The polypeptide is EF-hand calcium-binding domain-containing protein 11 (Efcab11) (Mus musculus (Mouse)).